The primary structure comprises 430 residues: MSHLDVFRKFTDDQGNYNKELVNDTHGLLSLYEAAQFRVHDEEILDEAINFTTTHLKLLLPKLSNSLSMQVSYALKYPINKTIARVATRKYISFYQEEESSCDQVLINFAKLDFSILQKMHKRELCDITRWWKELDLANELAFARDRVVELYFWCLGVYFEPQYKVARNILTKVLCFVSITDDIYDTYGTLHELTLLTNAIERWNLDATENLTSYMKLFYTGLLHFYNEVEKELEKENKSFRVNFAISEMKKLVRAYFQEAKWYHGNTVPKMEEEYMKNGIQSSANPTLATASWLGMGDEATKEAFEWISTEPPILVASSNIARLLNDIVSHEREIERGDVASSIECYMNEYGATKEEAYMEIRKIIENNWKDLNRGCLKPTTVPRVLLMPVLNLTRVAEFVYKDEDAYTFSKNNLKEVISMVLDDPIEE.

Mg(2+) is bound by residues Asp182, Asp186, and Glu335. Residues 182 to 186 carry the DDXXD motif motif; that stretch reads DDIYD.

Belongs to the terpene synthase family. Tpsa subfamily. Mg(2+) serves as cofactor. The cofactor is Mn(2+).

It participates in secondary metabolite biosynthesis; terpenoid biosynthesis. Sesquiterpene synthase involved in the biosynthesis of volatile compounds. No activity detected with geranyl diphosphate (GPP) and farnesyl diphosphate (FPP) as substrates. The protein is Sesquiterpene synthase 15 of Solanum lycopersicum (Tomato).